The chain runs to 96 residues: UPF0235 protein VP2619 (96 aa).

It belongs to the UPF0235 family.

This Vibrio parahaemolyticus serotype O3:K6 (strain RIMD 2210633) protein is UPF0235 protein VP2619.